The sequence spans 53 residues: UPF0391 membrane protein gsr2640 (53 aa).

Transmembrane regions (helical) follow at residues 4-24 and 32-49; these read LLWLVVVLMVIAALLGFGGVV and WFLIVAAVVLAVVGFVTG.

It belongs to the UPF0391 family.

Its subcellular location is the cell membrane. The protein is UPF0391 membrane protein gsr2640 of Gloeobacter violaceus (strain ATCC 29082 / PCC 7421).